Consider the following 283-residue polypeptide: Protoheme IX farnesyltransferase 1 (283 aa).

9 helical membrane passes run 14-34, 35-55, 84-104, 107-127, 133-153, 163-183, 208-228, 231-251, and 258-278; these read IALMIALTAITGYGAVATKVD, PVALLLLTLAMILGSAASAVF, LGFALAVVLMVAGMALANAAF, VVALHLFLGGFVYVAIYTVWL, TNIIIGGAAGSFAVLAGAAAV, VLALVLFLWTPSHFWSLAILL, ILANTVILVGASLLPWGLGLL, VYGFVAAVSGAVLLGFNVVLV, and WAGWNFAASMPYLLLLFIAVF.

This sequence belongs to the UbiA prenyltransferase family. Protoheme IX farnesyltransferase subfamily.

The protein resides in the cell inner membrane. The enzyme catalyses heme b + (2E,6E)-farnesyl diphosphate + H2O = Fe(II)-heme o + diphosphate. It participates in porphyrin-containing compound metabolism; heme O biosynthesis; heme O from protoheme: step 1/1. Functionally, converts heme B (protoheme IX) to heme O by substitution of the vinyl group on carbon 2 of heme B porphyrin ring with a hydroxyethyl farnesyl side group. In Paramagnetospirillum magneticum (strain ATCC 700264 / AMB-1) (Magnetospirillum magneticum), this protein is Protoheme IX farnesyltransferase 1.